A 175-amino-acid chain; its full sequence is Large ribosomal subunit protein uL6 (175 aa).

Belongs to the universal ribosomal protein uL6 family. Part of the 50S ribosomal subunit.

This protein binds to the 23S rRNA, and is important in its secondary structure. It is located near the subunit interface in the base of the L7/L12 stalk, and near the tRNA binding site of the peptidyltransferase center. This Xanthomonas oryzae pv. oryzae (strain MAFF 311018) protein is Large ribosomal subunit protein uL6.